Here is a 287-residue protein sequence, read N- to C-terminus: Lipoyl synthase (287 aa).

Positions 34, 39, 45, 60, 64, 67, and 273 each coordinate [4Fe-4S] cluster. In terms of domain architecture, Radical SAM core spans tryptophan 46–leucine 262.

It belongs to the radical SAM superfamily. Lipoyl synthase family. Requires [4Fe-4S] cluster as cofactor.

It is found in the cytoplasm. The catalysed reaction is [[Fe-S] cluster scaffold protein carrying a second [4Fe-4S](2+) cluster] + N(6)-octanoyl-L-lysyl-[protein] + 2 oxidized [2Fe-2S]-[ferredoxin] + 2 S-adenosyl-L-methionine + 4 H(+) = [[Fe-S] cluster scaffold protein] + N(6)-[(R)-dihydrolipoyl]-L-lysyl-[protein] + 4 Fe(3+) + 2 hydrogen sulfide + 2 5'-deoxyadenosine + 2 L-methionine + 2 reduced [2Fe-2S]-[ferredoxin]. Its pathway is protein modification; protein lipoylation via endogenous pathway; protein N(6)-(lipoyl)lysine from octanoyl-[acyl-carrier-protein]: step 2/2. Catalyzes the radical-mediated insertion of two sulfur atoms into the C-6 and C-8 positions of the octanoyl moiety bound to the lipoyl domains of lipoate-dependent enzymes, thereby converting the octanoylated domains into lipoylated derivatives. This is Lipoyl synthase from Wolbachia sp. subsp. Brugia malayi (strain TRS).